Consider the following 312-residue polypeptide: tRNA-dihydrouridine(16) synthase (312 aa).

FMN is bound by residues 7–9 (PME) and Gln-68. The active-site Proton donor is the Cys-98. FMN contacts are provided by residues Lys-139, 200-202 (NGE), and 224-225 (GR).

This sequence belongs to the Dus family. DusC subfamily. The cofactor is FMN.

The enzyme catalyses 5,6-dihydrouridine(16) in tRNA + NADP(+) = uridine(16) in tRNA + NADPH + H(+). It carries out the reaction 5,6-dihydrouridine(16) in tRNA + NAD(+) = uridine(16) in tRNA + NADH + H(+). In terms of biological role, catalyzes the synthesis of 5,6-dihydrouridine (D), a modified base found in the D-loop of most tRNAs, via the reduction of the C5-C6 double bond in target uridines. Specifically modifies U16 in tRNAs. In Yersinia pestis, this protein is tRNA-dihydrouridine(16) synthase.